Consider the following 248-residue polypeptide: Putative transposase YncI (248 aa).

The protein belongs to the transposase 11 family.

This Escherichia coli (strain K12) protein is Putative transposase YncI (yncI).